A 187-amino-acid polypeptide reads, in one-letter code: GMP synthase [glutamine-hydrolyzing] subunit A (187 aa).

The Glutamine amidotransferase type-1 domain occupies 1 to 187; it reads MILIIDNHGQ…KNFAKLCGEL (187 aa). Catalysis depends on Cys76, which acts as the Nucleophile. Catalysis depends on residues His164 and Glu166.

Heterodimer composed of a glutamine amidotransferase subunit (A) and a GMP-binding subunit (B).

The catalysed reaction is XMP + L-glutamine + ATP + H2O = GMP + L-glutamate + AMP + diphosphate + 2 H(+). It functions in the pathway purine metabolism; GMP biosynthesis; GMP from XMP (L-Gln route): step 1/1. In terms of biological role, catalyzes the synthesis of GMP from XMP. This is GMP synthase [glutamine-hydrolyzing] subunit A from Methanopyrus kandleri (strain AV19 / DSM 6324 / JCM 9639 / NBRC 100938).